The primary structure comprises 328 residues: Formimidoylglutamase (328 aa).

Residues His133, Asp159, His161, Asp163, Asp253, and Asp255 each contribute to the Mn(2+) site.

It belongs to the arginase family. Mn(2+) is required as a cofactor.

The enzyme catalyses N-formimidoyl-L-glutamate + H2O = formamide + L-glutamate. Its pathway is amino-acid degradation; L-histidine degradation into L-glutamate; L-glutamate from N-formimidoyl-L-glutamate (hydrolase route): step 1/1. Catalyzes the conversion of N-formimidoyl-L-glutamate to L-glutamate and formamide. In Streptococcus pyogenes serotype M28 (strain MGAS6180), this protein is Formimidoylglutamase.